The sequence spans 32 residues: AQIDCDKECNRRCSKAYCGICCEKCHCVPPGT.

It belongs to the GASA family. In terms of tissue distribution, expressed in pollen (at protein level).

In Cupressus sempervirens (Italian cypress), this protein is Cypmaclein.